Reading from the N-terminus, the 312-residue chain is NAD(P)(+)--arginine ADP-ribosyltransferase 2 (312 aa).

A signal peptide spans 1-20; the sequence is MELLALRWVLLAGTLLSTSA. A propeptide spanning residues 21–31 is cleaved from the precursor; the sequence is ASSALQEGDLG. 2 cysteine pairs are disulfide-bonded: cysteine 51/cysteine 260 and cysteine 159/cysteine 208. Residues 71-256 enclose the TR mART core domain; sequence YAYAVGWRKA…IYLRSKGKMS (186 aa). Positions 108, 164, and 183 each coordinate NAD(+). Arginine 164 is a catalytic residue. The active site involves serine 186. Position 217 (serine 217) interacts with NAD(+). The active site involves glutamate 224. The propeptide occupies 267–312; sequence GGQWGRGHQEVGLGLSPGLALPVLPCSNCSCWGSGHRAGDPIPAAV.

The protein belongs to the Arg-specific ADP-ribosyltransferase family.

Its subcellular location is the secreted. The protein localises to the extracellular space. It catalyses the reaction L-arginyl-[protein] + NAD(+) = N(omega)-(ADP-D-ribosyl)-L-arginyl-[protein] + nicotinamide + H(+). This Gallus gallus (Chicken) protein is NAD(P)(+)--arginine ADP-ribosyltransferase 2.